A 104-amino-acid chain; its full sequence is METIAFRMHLHPGKRDEYRRRHDAIWPELADALRAAGISDYWIFLDDDTHHLFAVLKRPADHRIAQLAETDVMRRWWAYMADLMATGPDGRPVEKALEPMFHLE.

Y18 lines the substrate pocket. The Proton donor role is filled by H22. Substrate is bound by residues Y41 and 76–77 (WW).

The protein belongs to the rhamnose mutarotase family. In terms of assembly, homodimer.

Its subcellular location is the cytoplasm. It catalyses the reaction alpha-L-rhamnose = beta-L-rhamnose. Its pathway is carbohydrate metabolism; L-rhamnose metabolism. Functionally, involved in the anomeric conversion of L-rhamnose. This is L-rhamnose mutarotase from Burkholderia cenocepacia (strain HI2424).